The chain runs to 169 residues: Disulfide bond formation protein B (169 aa).

Over 1–14 (MSNDTFYLKREKRF) the chain is Cytoplasmic. Residues 15–31 (LVLLGIICLSLIGGALY) form a helical membrane-spanning segment. Over 32 to 49 (MQIALGEAPCPLCILQRY) the chain is Periplasmic. An intrachain disulfide couples Cys41 to Cys44. The helical transmembrane segment at 50–64 (ALLFIAIFAFIGAAM) threads the bilayer. Residues 65-71 (NGRRGVT) are Cytoplasmic-facing. The chain crosses the membrane as a helical span at residues 72–89 (VFEALVTLSALCGIAAAG). The Periplasmic segment spans residues 90–144 (RHAWILAHPSDSCGIDILQPIVDGLPLATLFPTGFQVSGFCTTPYPPVLGLSLAQ). Residues Cys102 and Cys130 are joined by a disulfide bond. A helical transmembrane segment spans residues 145–163 (WALTAFVLTAILVPACIIR). At 164 to 169 (NRRKPY) the chain is on the cytoplasmic side.

It belongs to the DsbB family.

It is found in the cell inner membrane. Required for disulfide bond formation in some periplasmic proteins. Acts by oxidizing the DsbA protein. In Pseudomonas syringae pv. tomato (strain ATCC BAA-871 / DC3000), this protein is Disulfide bond formation protein B.